The primary structure comprises 56 residues: uncharacterized protein (56 aa).

Residues 12 to 32 form a helical membrane-spanning segment; that stretch reads GITLFPYFAILILILAILVVG. Residues 19 to 31 form a hydrophobic region; it reads FAILILILAILVV.

It localises to the membrane. This is an uncharacterized protein from Chenopodium amaranticolor (Quinoa).